The sequence spans 217 residues: Small ribosomal subunit protein uS3 (217 aa).

One can recognise a KH type-2 domain in the interval 40 to 110 (IRDLINKGFN…EVYINIHEVR (71 aa)).

Belongs to the universal ribosomal protein uS3 family. As to quaternary structure, part of the 30S ribosomal subunit. Forms a tight complex with proteins S10 and S14.

Binds the lower part of the 30S subunit head. Binds mRNA in the 70S ribosome, positioning it for translation. This is Small ribosomal subunit protein uS3 from Rickettsia africae (strain ESF-5).